Consider the following 172-residue polypeptide: Mitochondrial import inner membrane translocase subunit Tim17-B (172 aa).

A disulfide bond links Cys9 and Cys78. The next 3 membrane-spanning stretches (helical) occupy residues 17–37, 61–77, and 113–133; these read CGGAFTMGVIGGGVFQAIKGF, QIGGSFAVWGGLFSTID, and VGSAMMGGILLALIEGVGILL. The tract at residues 146 to 172 is disordered; the sequence is PFLEDPSQLPPKDGTPAPGYPSYQQYH.

This sequence belongs to the Tim17/Tim22/Tim23 family. In terms of assembly, component of the TIM23 complex at least composed of TIMM23, TIMM17 (TIMM17A or TIMM17B) and TIMM50. The complex interacts with the TIMM44 component of the PAM complex and with DNAJC15. Forms one disulfide bond. Expression is abundant in heart and skeletal muscle, intermediate in brain, and weak in pancreas, placenta, kidney and liver.

It localises to the mitochondrion inner membrane. Functionally, essential component of the TIM23 complex, a complex that mediates the translocation of transit peptide-containing proteins across the mitochondrial inner membrane. This Homo sapiens (Human) protein is Mitochondrial import inner membrane translocase subunit Tim17-B (TIMM17B).